We begin with the raw amino-acid sequence, 1413 residues long: DNA-directed RNA polymerase subunit beta' (1413 aa).

4 residues coordinate Zn(2+): cysteine 70, cysteine 72, cysteine 85, and cysteine 88. Mg(2+)-binding residues include aspartate 460, aspartate 462, and aspartate 464. The Zn(2+) site is built by cysteine 819, cysteine 893, cysteine 900, and cysteine 903. The interval 1393–1413 (EAFEFGTPETPAAEQTPHTNE) is disordered.

Belongs to the RNA polymerase beta' chain family. The RNAP catalytic core consists of 2 alpha, 1 beta, 1 beta' and 1 omega subunit. When a sigma factor is associated with the core the holoenzyme is formed, which can initiate transcription. Mg(2+) serves as cofactor. It depends on Zn(2+) as a cofactor.

The enzyme catalyses RNA(n) + a ribonucleoside 5'-triphosphate = RNA(n+1) + diphosphate. In terms of biological role, DNA-dependent RNA polymerase catalyzes the transcription of DNA into RNA using the four ribonucleoside triphosphates as substrates. This chain is DNA-directed RNA polymerase subunit beta', found in Paraburkholderia phymatum (strain DSM 17167 / CIP 108236 / LMG 21445 / STM815) (Burkholderia phymatum).